Consider the following 424-residue polypeptide: MFTCEAGIASVQQAIKDVAEGKFVIVIDAASRENEGDLILAGEKVSTEKMSFLLSHTTGIVCASLSREQAKSLDLPAMVQDNQCAFKTAFTVSVDASSGVTTGVSASDRTRTVQLLADPAATAESFVRPGHVFPLISQPGGAVQRPGHTEAAMDLMRLAGMQPCGIFAELVNPDHSMMRQQQVLAFAEQHDLTVITVDDLITYRYTYDSLVTKISSARLPTKYGDFSIHVYESIIDGTQHFALVKGDIHEQEAVPVRVHSECLTGDILGSCRCDCGAQLDMAMRYIAEEGLGVIVYLRGQEGRGIGFGHKIRAYALQDLGYDTVDANLQLGFPIDAREYGMAAQVLKDLQLTSVRLITHNPRKFFELQRLGIHVLDRIILPVSISTENEGYLRTKKERMGHWLDLPVLDDVEEEYETVERMSCR.

The tract at residues Met1–Thr206 is DHBP synthase. Residues Arg32–Glu33, Asp37, Arg145–Thr149, and Glu169 each bind D-ribulose 5-phosphate. Residue Glu33 coordinates Mg(2+). His148 serves as a coordination point for Mg(2+). Positions Tyr207 to Arg424 are GTP cyclohydrolase II. A GTP-binding site is contributed by Arg257 to Glu261. 3 residues coordinate Zn(2+): Cys262, Cys273, and Cys275. Residues Gln278, Glu301–Arg303, and Thr323 each bind GTP. Asp335 (proton acceptor; for GTP cyclohydrolase activity) is an active-site residue. Arg337 serves as the catalytic Nucleophile; for GTP cyclohydrolase activity. Residues Thr358 and Lys363 each coordinate GTP.

In the N-terminal section; belongs to the DHBP synthase family. It in the C-terminal section; belongs to the GTP cyclohydrolase II family. It depends on Mg(2+) as a cofactor. Mn(2+) serves as cofactor. Zn(2+) is required as a cofactor.

It carries out the reaction D-ribulose 5-phosphate = (2S)-2-hydroxy-3-oxobutyl phosphate + formate + H(+). It catalyses the reaction GTP + 4 H2O = 2,5-diamino-6-hydroxy-4-(5-phosphoribosylamino)-pyrimidine + formate + 2 phosphate + 3 H(+). It functions in the pathway cofactor biosynthesis; riboflavin biosynthesis; 2-hydroxy-3-oxobutyl phosphate from D-ribulose 5-phosphate: step 1/1. Its pathway is cofactor biosynthesis; riboflavin biosynthesis; 5-amino-6-(D-ribitylamino)uracil from GTP: step 1/4. Its function is as follows. Catalyzes the conversion of D-ribulose 5-phosphate to formate and 3,4-dihydroxy-2-butanone 4-phosphate. In terms of biological role, catalyzes the conversion of GTP to 2,5-diamino-6-ribosylamino-4(3H)-pyrimidinone 5'-phosphate (DARP), formate and pyrophosphate. The sequence is that of Riboflavin biosynthesis protein RibBA from Chlamydia trachomatis serovar D (strain ATCC VR-885 / DSM 19411 / UW-3/Cx).